The chain runs to 339 residues: MHLSAPHFWWKNKSFLRFLLAPISWGYAYFSRRRMARHPPIVDLPVLCIGNFTCGGAGKTPVVIAFAKVAKELGFVPGVVSRGYGGRVKGIHLVNEEHDNAYDVGDEALLLARHAFVAISVDRYAAAQRLKKEGCNLILMDDGFQSRRLYMDYALLVVDAMRGFGNGAVFPAGPLRVPLKTQFSLMDSVLLIGDSDACDYIAFLVNRTGKSLHHAHLESLASDKVAGKSFLAFAGIGNPDKFLKSIKELSGHVVQTYFYPDHYFFTNTDLKNLVQRAKMHNLWLATTAKDYIRIQTSKMQEDLKNLVVFDINVNFVQKNFCRVLLQEVMIRFRERKHSL.

53–60 is an ATP binding site; that stretch reads TCGGAGKT.

The protein belongs to the LpxK family.

The catalysed reaction is a lipid A disaccharide + ATP = a lipid IVA + ADP + H(+). Its pathway is glycolipid biosynthesis; lipid IV(A) biosynthesis; lipid IV(A) from (3R)-3-hydroxytetradecanoyl-[acyl-carrier-protein] and UDP-N-acetyl-alpha-D-glucosamine: step 6/6. Functionally, transfers the gamma-phosphate of ATP to the 4'-position of a tetraacyldisaccharide 1-phosphate intermediate (termed DS-1-P) to form tetraacyldisaccharide 1,4'-bis-phosphate (lipid IVA). This is Tetraacyldisaccharide 4'-kinase from Bartonella henselae (strain ATCC 49882 / DSM 28221 / CCUG 30454 / Houston 1) (Rochalimaea henselae).